A 1148-amino-acid polypeptide reads, in one-letter code: Phospholipid-transporting ATPase IB (1148 aa).

Over 1–54 (MSRATSVGDQLDVPARTIYLNQPHLNKFCDNQISTAKYSVVTFLPRFLYEQIRR) the chain is Cytoplasmic. Thr5 carries the post-translational modification Phosphothreonine. Residues 55-75 (AANAFFLFIALLQQIPDVSPT) form a helical membrane-spanning segment. At 76 to 79 (GRYT) the chain is on the exoplasmic loop side. A helical transmembrane segment spans residues 80-100 (TLVPLIIILTIAGIKEIVEDF). Residues 101–276 (KRHKADNAVN…SNVEKVTNVQ (176 aa)) lie on the Cytoplasmic side of the membrane. The chain crosses the membrane as a helical span at residues 277-297 (ILVLFGILLVMALVSSVGALY). The Exoplasmic loop segment spans residues 298–324 (WNGSQGGKNWYIKKMDATSDNFGYNLL). The helical transmembrane segment at 325 to 345 (TFIILYNNLIPISLLVTLEVV) threads the bilayer. Over 346 to 847 (KYTQALFINW…CILYCFYKNV (502 aa)) the chain is Cytoplasmic. Asp388 (4-aspartylphosphate intermediate) is an active-site residue. 12 residues coordinate ATP: Asp388, Lys389, Thr390, Glu488, Phe529, Lys552, Arg585, Thr665, Gly666, Asp667, Arg755, and Lys761. Position 388 (Asp388) interacts with Mg(2+). Mg(2+) is bound at residue Thr390. Residue Asp781 coordinates Mg(2+). ATP contacts are provided by Asn784 and Asp785. Asp785 is a binding site for Mg(2+). The chain crosses the membrane as a helical span at residues 848-868 (VLYIIELWFAFVNGFSGQILF). Residues 869-870 (ER) are Exoplasmic loop-facing. The chain crosses the membrane as a helical span at residues 871-891 (WCIGLYNVIFTALPPFTLGIF). The Cytoplasmic portion of the chain corresponds to 892 to 919 (ERSCSQESMLRFPQLYKITQNAEGFNTK). A helical membrane pass occupies residues 920–940 (VFWGHCINALVHSLILFWFPM). Residues 941–957 (KALEHDTVLANGHATDY) are Exoplasmic loop-facing. The chain crosses the membrane as a helical span at residues 958 to 978 (LFVGNIVYTYVVVTVCLKAGL). Residues 979 to 988 (ETTAWTKFSH) lie on the Cytoplasmic side of the membrane. A helical transmembrane segment spans residues 989–1009 (LAVWGSMLIWLVFFGIYSTIW). The Exoplasmic loop segment spans residues 1010 to 1023 (PTIPIAPDMKGQAT). The helical transmembrane segment at 1024 to 1044 (MVLSSAHFWLGLFLVPTACLI) threads the bilayer. At 1045–1148 (EDVAWRAAKH…DTTKQKSRKK (104 aa)) the chain is on the cytoplasmic side. The segment at 1102 to 1126 (PPTLFRGSSLQQSMPHGYAFSQEEH) is disordered.

The protein belongs to the cation transport ATPase (P-type) (TC 3.A.3) family. Type IV subfamily. As to quaternary structure, component of a P4-ATPase flippase complex which consists of a catalytic alpha subunit and an accessory beta subunit. Interacts with TMEM30A to form a flippase complex. Requires Mg(2+) as cofactor. Expressed in retinal photoreceptor cells and testis.

It is found in the membrane. Its subcellular location is the golgi apparatus membrane. It localises to the endosome membrane. The protein localises to the cell membrane. The protein resides in the photoreceptor outer segment membrane. It is found in the photoreceptor inner segment membrane. The enzyme catalyses ATP + H2O + phospholipidSide 1 = ADP + phosphate + phospholipidSide 2.. It catalyses the reaction a 1,2-diacyl-sn-glycero-3-phospho-L-serine(out) + ATP + H2O = a 1,2-diacyl-sn-glycero-3-phospho-L-serine(in) + ADP + phosphate + H(+). The catalysed reaction is a 1,2-diacyl-sn-glycero-3-phosphoethanolamine(in) + ATP + H2O = a 1,2-diacyl-sn-glycero-3-phosphoethanolamine(out) + ADP + phosphate + H(+). With respect to regulation, ATPase activity is stimulated by phosphatidylserine (PS) and minimally by phosphatidylethanolamine (PE). ATPase activity is inhibited by N-ethylmaleimide (NEM) and vanadate. Flippase activity is inhibited by NEM and 1,2-dioleoyl-sn-glycero-3-phospho-L-serine (DOPS). In terms of biological role, catalytic component of a P4-ATPase flippase complex which catalyzes the hydrolysis of ATP coupled to the transport of aminophospholipids from the outer to the inner leaflet of various membranes and ensures the maintenance of asymmetric distribution of phospholipids. Able to translocate phosphatidylserine, but not phosphatidylcholine. Phospholipid translocation seems also to be implicated in vesicle formation and in uptake of lipid signaling molecules. Reconstituted to liposomes, the ATP8A2:TMEM30A flippase complex predominantly transports phosphatidylserine (PS) and to a lesser extent phosphatidylethanolamine (PE). Phospholipid translocation is not associated with a countertransport of an inorganic ion or other charged substrate from the cytoplasmic side toward the exoplasm in connection with the phosphorylation from ATP. ATP8A2:TMEM30A may be involved in regulation of neurite outgrowth. Proposed to function in the generation and maintenance of phospholipid asymmetry in photoreceptor disk membranes and neuronal axon membranes. May be involved in vesicle trafficking in neuronal cells. Required for normal visual and auditory function; involved in photoreceptor and inner ear spiral ganglion cell survival. The protein is Phospholipid-transporting ATPase IB of Bos taurus (Bovine).